Here is a 125-residue protein sequence, read N- to C-terminus: MORF4 family-associated protein 1 (125 aa).

Residues 76-99 (ESALNHLQGAGGAEPRGPRAEKAD) are disordered. Residues 94–124 (RAEKADEKAQEMAKMAEMLVQLVRRIEKSES) are a coiled coil.

This sequence belongs to the MORF4 family-associated protein family. Found in a complex composed of MORF4L1, MRFAP1 and RB1. Interacts via its N-terminus with MORF4L1. Interacts with CSTB and MORF4L2. Widely expressed in all tissues examined and as early as 7 days during embryonic development.

It localises to the nucleus. The protein resides in the cytoplasm. Its subcellular location is the perinuclear region. This Mus musculus (Mouse) protein is MORF4 family-associated protein 1.